Consider the following 1058-residue polypeptide: Structural maintenance of chromosomes protein 6A (1058 aa).

Residues 23–1049 (ILRIRLENFM…SMVKSHEKIK (1027 aa)) form the Zinc-hook domain. ATP is bound at residue 50-57 (GQNGSGKS). Residues 136–449 (KISSRKEELR…NDLKKHQTNK (314 aa)) adopt a coiled-coil conformation. Residues 450 to 633 (VTAFGGDKVI…PPRPRRPTRL (184 aa)) are flexible hinge. The stretch at 634–927 (CASFDDQIKD…RNKDLLKREL (294 aa)) forms a coiled coil.

This sequence belongs to the SMC family. SMC6 subfamily. In terms of assembly, forms a heterodimer with SMC5. The SMC5-SMC6 complex is composed of the SMC5 and SMC6 heterodimer attached via their hinge domain and from the non-SMC subunit NSE4A or NSE4B. As to expression, expressed in seedlings, rosette leaves and floral buds.

Its subcellular location is the nucleus. It is found in the chromosome. Functionally, core component of the SMC5-SMC6 complex that promotes sister chromatid alignment after DNA damage and facilitates double-stranded DNA breaks (DSBs) repair via homologous recombination between sister chromatids. The sequence is that of Structural maintenance of chromosomes protein 6A (SMC6A) from Arabidopsis thaliana (Mouse-ear cress).